Consider the following 119-residue polypeptide: Large ribosomal subunit protein bL20 (119 aa).

Belongs to the bacterial ribosomal protein bL20 family.

In terms of biological role, binds directly to 23S ribosomal RNA and is necessary for the in vitro assembly process of the 50S ribosomal subunit. It is not involved in the protein synthesizing functions of that subunit. This is Large ribosomal subunit protein bL20 from Streptococcus agalactiae serotype Ia (strain ATCC 27591 / A909 / CDC SS700).